The following is a 344-amino-acid chain: Adenosine deaminase (344 aa).

Residues His-14 and His-16 each coordinate Zn(2+). 3 residues coordinate substrate: His-16, Asp-18, and Gly-177. Residue His-204 coordinates Zn(2+). Glu-207 functions as the Proton donor in the catalytic mechanism. Asp-284 lines the Zn(2+) pocket.

The protein belongs to the metallo-dependent hydrolases superfamily. Adenosine and AMP deaminases family. Adenosine deaminase subfamily. Zn(2+) serves as cofactor.

The catalysed reaction is adenosine + H2O + H(+) = inosine + NH4(+). The enzyme catalyses 2'-deoxyadenosine + H2O + H(+) = 2'-deoxyinosine + NH4(+). Catalyzes the hydrolytic deamination of adenosine and 2-deoxyadenosine. The polypeptide is Adenosine deaminase (Haemophilus ducreyi (strain 35000HP / ATCC 700724)).